The sequence spans 341 residues: DNA-directed RNA polymerase subunit alpha (341 aa).

The segment at 1 to 237 is alpha N-terminal domain (alpha-NTD); it reads MLSLSKNWNA…EQLQLFISFE (237 aa). The interval 252–341 is alpha C-terminal domain (alpha-CTD); that stretch reads FSPYLLKRVD…LSKRYEDSYN (90 aa).

Belongs to the RNA polymerase alpha chain family. In terms of assembly, homodimer. The RNAP catalytic core consists of 2 alpha, 1 beta, 1 beta' and 1 omega subunit. When a sigma factor is associated with the core the holoenzyme is formed, which can initiate transcription.

The catalysed reaction is RNA(n) + a ribonucleoside 5'-triphosphate = RNA(n+1) + diphosphate. Functionally, DNA-dependent RNA polymerase catalyzes the transcription of DNA into RNA using the four ribonucleoside triphosphates as substrates. The protein is DNA-directed RNA polymerase subunit alpha of Rickettsia bellii (strain OSU 85-389).